A 156-amino-acid polypeptide reads, in one-letter code: Small ribosomal subunit protein uS7 (156 aa).

Belongs to the universal ribosomal protein uS7 family. As to quaternary structure, part of the 30S ribosomal subunit. Contacts proteins S9 and S11.

Its function is as follows. One of the primary rRNA binding proteins, it binds directly to 16S rRNA where it nucleates assembly of the head domain of the 30S subunit. Is located at the subunit interface close to the decoding center, probably blocks exit of the E-site tRNA. The chain is Small ribosomal subunit protein uS7 from Prochlorococcus marinus (strain MIT 9301).